The chain runs to 100 residues: MTRTRTVKKEKISVASEIDRVEERKLQCKNSLERAEFRKRKQQLSDDDRLALEDEMTILNERVEKYEKDLQVLRGENRRNMMLSVALLAISALFYYTFIY.

A coiled-coil region spans residues 14–81 (VASEIDRVEE…VLRGENRRNM (68 aa)). Residues 82-99 (MLSVALLAISALFYYTFI) traverse the membrane as a helical segment.

It localises to the membrane. The chain is Coiled-coil domain-containing protein 167 (ccdc167) from Danio rerio (Zebrafish).